We begin with the raw amino-acid sequence, 250 residues long: NAD(P)H-quinone oxidoreductase subunit S, chloroplastic (250 aa).

Residues 1-48 (MATSSITIPTIRTPIHRSKFLGQTHQFSTVNRSVFPPPKQQSKLYQVK) constitute a chloroplast transit peptide. A Glycyl lysine isopeptide (Lys-Gly) (interchain with G-Cter in ubiquitin) cross-link involves residue lysine 52. Composition is skewed to basic and acidic residues over residues 76 to 94 (QRNI…NETE) and 106 to 115 (VPEDGFEKEM). Disordered regions lie at residues 76–163 (QRNI…KPKA) and 222–250 (REKG…EAAP). Residues 136 to 146 (NPPPPPPPPPA) are compositionally biased toward pro residues.

In terms of assembly, part of the chloroplast NDH complex, composed of a mixture of chloroplast and nucleus encoded subunits. Component of the electron donor-binding subcomplex, at least composed of NDHS, NDHT and NDHU. Interacts with the NDH subcomplex A via the protein NDHT and NDHU. Arg-193 is the critical site for the high affinity binding of NDH to ferredoxin.

It localises to the plastid. Its subcellular location is the chloroplast thylakoid membrane. It catalyses the reaction a plastoquinone + NADH + (n+1) H(+)(in) = a plastoquinol + NAD(+) + n H(+)(out). It carries out the reaction a plastoquinone + NADPH + (n+1) H(+)(in) = a plastoquinol + NADP(+) + n H(+)(out). NDH shuttles electrons from NAD(P)H:plastoquinone, via FMN and iron-sulfur (Fe-S) centers, to quinones in the photosynthetic chain and possibly in a chloroplast respiratory chain. The immediate electron acceptor for the enzyme in this species is believed to be plastoquinone. Couples the redox reaction to proton translocation, and thus conserves the redox energy in a proton gradient. Required for the efficient operation of ferredoxin-dependent plastoquinone reduction. Forms the electron donor-binding subcomplex in association with the NDHT and NDHU subunits. This chain is NAD(P)H-quinone oxidoreductase subunit S, chloroplastic, found in Arabidopsis thaliana (Mouse-ear cress).